The sequence spans 611 residues: Chaperone protein HtpG (611 aa).

The a; substrate-binding stretch occupies residues 1–326 (MSETLERHAF…TEDLPLNVSR (326 aa)). The b stretch occupies residues 327–536 (EMLQATPVLA…SGGPDLQMQR (210 aa)). Residues 537–611 (LLRRAGRGFG…RVATALAAQG (75 aa)) are c.

Belongs to the heat shock protein 90 family. Homodimer.

It localises to the cytoplasm. Molecular chaperone. Has ATPase activity. This chain is Chaperone protein HtpG, found in Methylobacterium nodulans (strain LMG 21967 / CNCM I-2342 / ORS 2060).